Here is a 214-residue protein sequence, read N- to C-terminus: Thiamine-phosphate synthase (214 aa).

4-amino-2-methyl-5-(diphosphooxymethyl)pyrimidine is bound by residues 37–41 and Asn-73; that span reads QYREK. Positions 74 and 93 each coordinate Mg(2+). Ser-112 contacts 4-amino-2-methyl-5-(diphosphooxymethyl)pyrimidine. Position 139-141 (139-141) interacts with 2-[(2R,5Z)-2-carboxy-4-methylthiazol-5(2H)-ylidene]ethyl phosphate; that stretch reads TIS. Residue Lys-142 coordinates 4-amino-2-methyl-5-(diphosphooxymethyl)pyrimidine. 2-[(2R,5Z)-2-carboxy-4-methylthiazol-5(2H)-ylidene]ethyl phosphate is bound by residues Gly-171 and 191 to 192; that span reads IS.

This sequence belongs to the thiamine-phosphate synthase family. The cofactor is Mg(2+).

It catalyses the reaction 2-[(2R,5Z)-2-carboxy-4-methylthiazol-5(2H)-ylidene]ethyl phosphate + 4-amino-2-methyl-5-(diphosphooxymethyl)pyrimidine + 2 H(+) = thiamine phosphate + CO2 + diphosphate. The enzyme catalyses 2-(2-carboxy-4-methylthiazol-5-yl)ethyl phosphate + 4-amino-2-methyl-5-(diphosphooxymethyl)pyrimidine + 2 H(+) = thiamine phosphate + CO2 + diphosphate. It carries out the reaction 4-methyl-5-(2-phosphooxyethyl)-thiazole + 4-amino-2-methyl-5-(diphosphooxymethyl)pyrimidine + H(+) = thiamine phosphate + diphosphate. Its pathway is cofactor biosynthesis; thiamine diphosphate biosynthesis; thiamine phosphate from 4-amino-2-methyl-5-diphosphomethylpyrimidine and 4-methyl-5-(2-phosphoethyl)-thiazole: step 1/1. In terms of biological role, condenses 4-methyl-5-(beta-hydroxyethyl)thiazole monophosphate (THZ-P) and 2-methyl-4-amino-5-hydroxymethyl pyrimidine pyrophosphate (HMP-PP) to form thiamine monophosphate (TMP). This chain is Thiamine-phosphate synthase, found in Listeria monocytogenes serovar 1/2a (strain ATCC BAA-679 / EGD-e).